The following is a 60-amino-acid chain: Large ribosomal subunit protein bL32 (60 aa).

Belongs to the bacterial ribosomal protein bL32 family.

This is Large ribosomal subunit protein bL32 from Fervidobacterium nodosum (strain ATCC 35602 / DSM 5306 / Rt17-B1).